The sequence spans 339 residues: Protein RecA (339 aa).

73 to 80 provides a ligand contact to ATP; sequence GPESSGKT.

This sequence belongs to the RecA family.

The protein resides in the cytoplasm. Can catalyze the hydrolysis of ATP in the presence of single-stranded DNA, the ATP-dependent uptake of single-stranded DNA by duplex DNA, and the ATP-dependent hybridization of homologous single-stranded DNAs. It interacts with LexA causing its activation and leading to its autocatalytic cleavage. This chain is Protein RecA, found in Mycoplasmopsis pulmonis (strain UAB CTIP) (Mycoplasma pulmonis).